Here is a 1196-residue protein sequence, read N- to C-terminus: Calcium-activated potassium channel subunit alpha-1 (1196 aa).

Residues 1-52 (MATWNASQIILNSMSNIIESPQSKPRPVMASNGASLFIPVTMEVPCDQGTRM) lie on the Extracellular side of the membrane. A helical membrane pass occupies residues 53-73 (WWAFLASSMVTFFGGLFIILV). Topologically, residues 74–146 (WRTFKYLWTV…MISAQTLTGR (73 aa)) are cytoplasmic. The chain crosses the membrane as a helical span at residues 147-167 (VLVVTVFALSIGALMIYFIDS). Over 168 to 182 (SNPIESCQNFYKDFT) the chain is Extracellular. The helical transmembrane segment at 183–203 (LQIDMAFNIFFLLYFGLRFIA) threads the bilayer. The Cytoplasmic segment spans residues 204–207 (ANDK). The chain crosses the membrane as a helical span at residues 208-228 (LWFWLEVNSVVDFFTVPPVFV). Topologically, residues 229–232 (SVYL) are extracellular. The chain crosses the membrane as a helical; Voltage-sensor span at residues 233–253 (NRSWLGLRFLRALRLIQFSEI). Over 254–268 (LQFLNILKTSNSIKL) the chain is Cytoplasmic. Residues 269–289 (VNLCSIFISTWLTAAGFIHLV) traverse the membrane as a helical segment. Residues 290–303 (ENSGDPWRNFENSQ) are Extracellular-facing. The segment at residues 304 to 326 (DLSYWECMYLLMVTMSTVGYGDV) is an intramembrane region (pore-forming). The Selectivity for potassium signature appears at 320 to 323 (TVGY). Over 327–335 (YAKTTLGRL) the chain is Extracellular. Residues 336 to 356 (FMVFFILGGLAMFASYVPEII) form a helical membrane-spanning segment. Residues 357–1196 (ELIGNRKKYG…PPIREVEDEC (840 aa)) are Cytoplasmic-facing. One can recognise an RCK N-terminal 1 domain in the interval 375-517 (RKHIVVCGHI…WNWKDGDDAI (143 aa)). 3 residues coordinate Mg(2+): Glu407, Gln430, and Glu432. The interval 524–544 (LGFIAQSCLAQGLSTMLANLF) is segment S7. Residues 581 to 601 (LSFPAVCELCFVKLKLLMIAI) are segment S8. Residues 645 to 649 (CKACH) are heme-binding motif. The segment at 672–697 (SALSPKKKQRNGGMRHSPNTSPNMMR) is disordered. The interval 748–768 (VLSGHVVVCIFGDMTSALIGV) is segment S9. The region spanning 750 to 894 (SGHVVVCIFG…MERSSPDNSP (145 aa)) is the RCK N-terminal 2 domain. The Calcium bowl signature appears at 914–936 (TELVNDSNVQFLDQDDDDDPDTE). Ca(2+) is bound by residues Gln923, Asp926, Asp929, and Asp931. The segment at 943 to 963 (FACGTAFAVSVLDSLMSATYF) is segment S10. The segment covering 1098-1119 (ASLSHSSHSSHSSSKKSSSVTS) has biased composition (low complexity). A disordered region spans residues 1098–1149 (ASLSHSSHSSHSSSKKSSSVTSILHTASANRQNRVKARDSRDKQKMGQAEKK). Residues 1120-1129 (ILHTASANRQ) are compositionally biased toward polar residues. Over residues 1133–1149 (KARDSRDKQKMGQAEKK) the composition is skewed to basic and acidic residues.

It belongs to the potassium channel family. Calcium-activated (TC 1.A.1.3) subfamily. KCa1.1/KCNMA1 sub-subfamily. In terms of assembly, homotetramer; which constitutes the calcium-activated potassium channel. As to expression, expressed in both the somites and neural tube of 1 day embryos. Within the nervous system, it is restricted to dorsal parts, and expressed centrally in regions dedicated to processing of sensory information. Six hours later, it is expressed segmentally within the somites. At this time, it is expressed in a primary sensory organ, the trigeminal ganglion. By 2 days, it is also expressed in other primary sensory organs, such as the otic vesicle, and the eye. Within the retina, it is expressed to an internal layer. In the developing otic vesicle, it is abundantly expressed near the apical surface. Isoform 3 is neural-specific, and is only expressed during late stages of neuronal differentiation.

It localises to the cell membrane. The catalysed reaction is K(+)(in) = K(+)(out). Ethanol and carbon monoxide-bound heme increase channel activation. Heme inhibits channel activation. Functionally, potassium channel activated by both membrane depolarization or increase in cytosolic Ca(2+) that mediates export of K(+). It is also activated by the concentration of cytosolic Mg(2+). Its activation dampens the excitatory events that elevate the cytosolic Ca(2+) concentration and/or depolarize the cell membrane. It therefore contributes to repolarization of the membrane potential. Plays a key role in controlling excitability in a number of systems, such as regulation of the contraction of smooth muscle, the tuning of hair cells in the cochlea, regulation of transmitter release, and innate immunity. In smooth muscles, its activation by high level of Ca(2+), caused by ryanodine receptors in the sarcoplasmic reticulum, regulates the membrane potential. In cochlea cells, its number and kinetic properties partly determine the characteristic frequency of each hair cell and thereby helps to establish a tonotopic map. Highly sensitive to both iberiotoxin (IbTx) and charybdotoxin (CTX). The polypeptide is Calcium-activated potassium channel subunit alpha-1 (kcnma1) (Xenopus laevis (African clawed frog)).